A 154-amino-acid polypeptide reads, in one-letter code: SsrA-binding protein (154 aa).

It belongs to the SmpB family.

Its subcellular location is the cytoplasm. Its function is as follows. Required for rescue of stalled ribosomes mediated by trans-translation. Binds to transfer-messenger RNA (tmRNA), required for stable association of tmRNA with ribosomes. tmRNA and SmpB together mimic tRNA shape, replacing the anticodon stem-loop with SmpB. tmRNA is encoded by the ssrA gene; the 2 termini fold to resemble tRNA(Ala) and it encodes a 'tag peptide', a short internal open reading frame. During trans-translation Ala-aminoacylated tmRNA acts like a tRNA, entering the A-site of stalled ribosomes, displacing the stalled mRNA. The ribosome then switches to translate the ORF on the tmRNA; the nascent peptide is terminated with the 'tag peptide' encoded by the tmRNA and targeted for degradation. The ribosome is freed to recommence translation, which seems to be the essential function of trans-translation. This is SsrA-binding protein from Solidesulfovibrio magneticus (strain ATCC 700980 / DSM 13731 / RS-1) (Desulfovibrio magneticus).